Reading from the N-terminus, the 183-residue chain is Translation initiation factor IF-3 (183 aa).

Belongs to the IF-3 family. Monomer.

It localises to the cytoplasm. IF-3 binds to the 30S ribosomal subunit and shifts the equilibrium between 70S ribosomes and their 50S and 30S subunits in favor of the free subunits, thus enhancing the availability of 30S subunits on which protein synthesis initiation begins. In Pseudomonas putida (strain W619), this protein is Translation initiation factor IF-3.